A 418-amino-acid polypeptide reads, in one-letter code: Putative FBD-associated F-box protein At5g56560 (418 aa).

The F-box domain occupies 4-60 (QTRLSDLPDELLLKILSALPMFKVTLATRLISRRWKGPWKLVPDVTFDDDDIPFKSF). The FBD domain maps to 340 to 390 (LWEEPAVVAKCLSEHLEIFEWRQYEGTEQERNVAGYILANATCLKMATFST).

The protein is Putative FBD-associated F-box protein At5g56560 of Arabidopsis thaliana (Mouse-ear cress).